A 426-amino-acid chain; its full sequence is Probable serine/threonine-protein kinase PBL2 (426 aa).

The interval 1–54 (MGNCLDSSAKVDNSNHSPHANSASSGSKVSSKTSRSTGPSGLSTTSYSTDSSFG) is disordered. A lipid anchor (N-myristoyl glycine) is attached at Gly2. Residue Cys4 is the site of S-palmitoyl cysteine attachment. Over residues 14–38 (SNHSPHANSASSGSKVSSKTSRSTG) the composition is skewed to low complexity. Polar residues predominate over residues 39 to 52 (PSGLSTTSYSTDSS). Thr75 carries the phosphothreonine modification. The Protein kinase domain maps to 86–369 (FRQDNLLGEG…SEVLVTLEQL (284 aa)). ATP is bound by residues 92-100 (LGEGGFGCV) and Lys124. A Phosphotyrosine modification is found at Tyr169. Catalysis depends on Asp219, which acts as the Proton acceptor. Position 253 is an O-UMP-serine (Ser253). Phosphoserine is present on Ser253. A phosphothreonine mark is found at Thr254 and Thr259. An O-UMP-threonine modification is found at Thr254. Tyr267 carries the post-translational modification Phosphotyrosine. The segment at 374–426 (KPGTKHTQMESPRFHHSSVMQKSPVRYSHDRPLLHMTPGASPLPSYTQSPRVR) is disordered. A compositionally biased stretch (polar residues) spans 417-426 (PSYTQSPRVR).

Belongs to the protein kinase superfamily. Ser/Thr protein kinase family. As to quaternary structure, interacts with FLS2. Interacts with the Xanthomonas campestris effector XopAC/AvrAC; the recognition of X.campestris effector XopAC/AvrAC requires the presence of RKS1 and RPP13L4/ZAR1. Component of a stable high-order oligomeric complex made of RKS1 and RPP13L4/ZAR1 which recruits X.campestris effector XopAC/AvrAC-mediated uridylylated PBL2 in the presence of ATP to form a wheel-like pentameric resistosome; this complex triggers immunity toward X.campestris in vascular tissues. Binds to RKS1 when uridylylated. In terms of processing, uridylylated at Ser-253 and Thr-254 by Xanthomonas campestris effector AvrAC/XopAC; this uridylylation is necessary for specific recruitment to RKS1 and to trigger immunity. In terms of tissue distribution, strongly expressed in leaves, moderately in roots, and barely in flowers, mostly in pedicels.

It localises to the cell membrane. Its subcellular location is the nucleus. The catalysed reaction is L-seryl-[protein] + ATP = O-phospho-L-seryl-[protein] + ADP + H(+). The enzyme catalyses L-threonyl-[protein] + ATP = O-phospho-L-threonyl-[protein] + ADP + H(+). In terms of biological role, involved in disease resistance signaling. Contributes to pathogen-associated molecular pattern (PAMP)-triggered immunity (PTI) signaling and defense responses downstream of FLS2. Acts as a BIK1 decoy and enables Xanthomonas campestris AvrAC/XopAC detection; X.campestris effector AvrAC/XopAC-mediated uridylylation promotes the formation of a complex with RKS1 and RPP13L4/ZAR1 which, in turn, activates effector-triggered immunity (ETI) against X.campestris. Promotes, when uridylylated by AvrAC/XopAC, the release of ADP from the inactive RKS1-ZAR1 complex, thus activating the resistosome. The protein is Probable serine/threonine-protein kinase PBL2 of Arabidopsis thaliana (Mouse-ear cress).